The sequence spans 239 residues: Adenylate kinase 2 (239 aa).

An ATP-binding site is contributed by 29-34 (GSGKGT). The NMP stretch occupies residues 49-78 (STGDILRAIIASGSELGQKVQKITESGGLV). Residues threonine 50, arginine 55, 76–78 (GLV), 104–107 (GFPR), and glutamine 111 contribute to the AMP site. The segment at 145–182 (GRLFHLASGRSYHELFNPPKVPMVDDITGDRLVHRSDD) is LID. Residues arginine 146 and 155–156 (SY) contribute to the ATP site. Residues arginine 179 and arginine 190 each coordinate AMP.

The protein belongs to the adenylate kinase family. AK2 subfamily. Monomer. Mg(2+) is required as a cofactor.

The protein localises to the cytoplasm. Its subcellular location is the cytosol. It catalyses the reaction AMP + ATP = 2 ADP. It participates in purine metabolism; purine nucleotide biosynthesis. Its function is as follows. Catalyzes the reversible transfer of the terminal phosphate group between ATP and AMP. Plays an important role in cellular energy homeostasis and in adenine nucleotide metabolism. The polypeptide is Adenylate kinase 2 (Schistosoma mansoni (Blood fluke)).